A 424-amino-acid chain; its full sequence is Glutamyl-tRNA reductase (424 aa).

Substrate is bound by residues 53–56, Ser-111, 116–118, and Gln-122; these read TCNR and EPQ. Cys-54 serves as the catalytic Nucleophile. Position 191 to 196 (191 to 196) interacts with NADP(+); that stretch reads GAGEMI.

The protein belongs to the glutamyl-tRNA reductase family. Homodimer.

It catalyses the reaction (S)-4-amino-5-oxopentanoate + tRNA(Glu) + NADP(+) = L-glutamyl-tRNA(Glu) + NADPH + H(+). The protein operates within porphyrin-containing compound metabolism; protoporphyrin-IX biosynthesis; 5-aminolevulinate from L-glutamyl-tRNA(Glu): step 1/2. Functionally, catalyzes the NADPH-dependent reduction of glutamyl-tRNA(Glu) to glutamate 1-semialdehyde (GSA). This Bordetella avium (strain 197N) protein is Glutamyl-tRNA reductase.